The following is a 504-amino-acid chain: MKLLEQIEKWAVETPDQTAFVWRDAKITYKQLKEDSDALAHWISSEYPDDRSPIMVYGHMQPEMIINFLGCVKAGHAYIPVDLSIPADRVQRIAESSGAKLLLSGAEVTVTDLPVRITSEDNLKDIFFTHKGNTPNPEHAVKGDENFYIIYTSGSTGNPKGVQITYNCLVSFTKWTVEDFNLQTGQVFLNQAPFSFDLSVMDIYPSLVTGGTLWAIDKDMIARPKDLFASLEQSDIQVWTSTPSFAEMCLMEASFSESMLPNMKTFLFCGEVLPNEVARKLIERFPKAAIMNTYGPTEATVAVTGIHVTEEVLDQYKSLPVGYCKSDCRLLIMKEDGTIAPDGEKGEIVIVGPSVSVGYLGSPELTEKVFTMIDGERAYKTGDAGYVENGLLFYNGRLDFQIKLHGYRMELEEIEHHLRACSYVEGAVVVPIKKGEKYDYLLAVVVPGEHSFEKEFKLTSAIKKELNERLPNYMIPRKFMYHSSIPMTPNGKVDRKKLLSEVTA.

152–153 contacts ATP; sequence TS. A D-alanine-binding site is contributed by Asp-197. 292–297 serves as a coordination point for ATP; it reads NTYGPT. D-alanine is bound at residue Val-301. Residues Asp-383, 394–397, and Lys-492 contribute to the ATP site; that span reads YNGR. Position 492 (Lys-492) interacts with D-alanine.

It belongs to the ATP-dependent AMP-binding enzyme family. DltA subfamily.

The protein localises to the cytoplasm. The catalysed reaction is holo-[D-alanyl-carrier protein] + D-alanine + ATP = D-alanyl-[D-alanyl-carrier protein] + AMP + diphosphate. The protein operates within cell wall biogenesis; lipoteichoic acid biosynthesis. Catalyzes the first step in the D-alanylation of lipoteichoic acid (LTA), the activation of D-alanine and its transfer onto the D-alanyl carrier protein (Dcp) DltC. In an ATP-dependent two-step reaction, forms a high energy D-alanyl-AMP intermediate, followed by transfer of the D-alanyl residue as a thiol ester to the phosphopantheinyl prosthetic group of the Dcp. D-alanylation of LTA plays an important role in modulating the properties of the cell wall in Gram-positive bacteria, influencing the net charge of the cell wall. This is D-alanine--D-alanyl carrier protein ligase from Bacillus mycoides (strain KBAB4) (Bacillus weihenstephanensis).